A 433-amino-acid polypeptide reads, in one-letter code: V-type ATP synthase beta chain (433 aa).

It belongs to the ATPase alpha/beta chains family.

In terms of biological role, produces ATP from ADP in the presence of a proton gradient across the membrane. The V-type beta chain is a regulatory subunit. This Borrelia turicatae (strain 91E135) protein is V-type ATP synthase beta chain.